Consider the following 484-residue polypeptide: MGCYSSKNLKQSKRTILEKPFVDIGKVYILGDELGQGQFGITRKCVEKTSGKTYACKTILKTNLKSREDEEAVKREIRIMKHLSGEPNIVEFKKAYEDRDSVHIVMEYCGGGELFKKIEALSKDGKSYSEKEAVEIIRPIVNVVKNCHYMGVMLRDLKPENFLLSSTDKNATVKAIDFGCSVFIEEGEVHRKFAGSAYYIAPEVLQGKYGKEADIWSAGIILYILLCGKPPFVTEPEAQMFSEIKSAKIDVDSESWKFIDVKAKHLVNRMLNRNPKERISAAEVLGHPWMKDGEASDKPIDGVVLSRLKQFRDMNKLKKVALKVIAANLSEEEIKGLKTLFTNIDTDKSGTITLEELKTGLTRLGSNLSKTEVEQLMEAADVDGNGTIDIDEFISATMHRYRLDRDDHVYQAFQHFDKDNDGHITKEELEMAMKEHGVGDEVSIKQIITEVDTDNDGKINFEEFRTMMRSGSSLQPQRELLPIK.

Gly-2 carries the N-myristoyl glycine lipid modification. Residues 28-290 (YILGDELGQG…AAEVLGHPWM (263 aa)) form the Protein kinase domain. Residues 34–42 (LGQGQFGIT) and Lys-57 contribute to the ATP site. Catalysis depends on Asp-156, which acts as the Proton acceptor. At Ser-196 the chain carries Phosphoserine. An autoinhibitory domain region spans residues 295 to 325 (ASDKPIDGVVLSRLKQFRDMNKLKKVALKVI). EF-hand domains follow at residues 332-367 (EEIK…LGSN), 368-403 (LSKT…RYRL), 404-439 (DRDD…HGVG), and 444-474 (IKQI…GSSL). 20 residues coordinate Ca(2+): Asp-345, Asp-347, Ser-349, Thr-351, Glu-356, Asp-381, Asp-383, Asn-385, Thr-387, Glu-392, Asp-417, Asp-419, Asp-421, His-423, Glu-428, Asp-452, Asp-454, Asp-456, Lys-458, and Glu-463.

This sequence belongs to the protein kinase superfamily. Ser/Thr protein kinase family. CDPK subfamily.

The protein resides in the membrane. The catalysed reaction is L-seryl-[protein] + ATP = O-phospho-L-seryl-[protein] + ADP + H(+). It catalyses the reaction L-threonyl-[protein] + ATP = O-phospho-L-threonyl-[protein] + ADP + H(+). Its activity is regulated as follows. Activated by calcium. Autophosphorylation may play an important role in the regulation of the kinase activity. May play a role in signal transduction pathways that involve calcium as a second messenger. The protein is Calcium-dependent protein kinase 31 (CPK31) of Arabidopsis thaliana (Mouse-ear cress).